The following is a 373-amino-acid chain: Dual-specificity RNA methyltransferase RlmN (373 aa).

The Proton acceptor role is filled by Glu-94. Residues 100–339 (EDDRATLCVS…VIVRKTRGDD (240 aa)) enclose the Radical SAM core domain. Cys-107 and Cys-344 form a disulfide bridge. Residues Cys-114, Cys-118, and Cys-121 each contribute to the [4Fe-4S] cluster site. S-adenosyl-L-methionine is bound by residues 168–169 (GE), Ser-200, 222–224 (SIH), and Asn-301. Cys-344 serves as the catalytic S-methylcysteine intermediate.

Belongs to the radical SAM superfamily. RlmN family. [4Fe-4S] cluster is required as a cofactor.

The protein localises to the cytoplasm. The catalysed reaction is adenosine(2503) in 23S rRNA + 2 reduced [2Fe-2S]-[ferredoxin] + 2 S-adenosyl-L-methionine = 2-methyladenosine(2503) in 23S rRNA + 5'-deoxyadenosine + L-methionine + 2 oxidized [2Fe-2S]-[ferredoxin] + S-adenosyl-L-homocysteine. The enzyme catalyses adenosine(37) in tRNA + 2 reduced [2Fe-2S]-[ferredoxin] + 2 S-adenosyl-L-methionine = 2-methyladenosine(37) in tRNA + 5'-deoxyadenosine + L-methionine + 2 oxidized [2Fe-2S]-[ferredoxin] + S-adenosyl-L-homocysteine. Specifically methylates position 2 of adenine 2503 in 23S rRNA and position 2 of adenine 37 in tRNAs. m2A2503 modification seems to play a crucial role in the proofreading step occurring at the peptidyl transferase center and thus would serve to optimize ribosomal fidelity. In Shewanella sp. (strain MR-4), this protein is Dual-specificity RNA methyltransferase RlmN.